A 514-amino-acid chain; its full sequence is MVSNEYLTHGDKDEFDPAKWSSTPGELPPRSPATNLNVLIVGAGPAGLITALECWRKGHNVVRILERSQGPVYTGDIIVIGPSAICTLRHWPEICRELDQDRSDSVMYYRRHNGELILGPTTLGYNSPEHLAQRHGLPYVAPHQVRRQFYRMLLRQVARIGLQVEYGQRVERYFEDEAAGVGGVVTADGSVRAAHLVVAADAFKTRSDLLIAGRHAPTRSSGMSVYRAALPTELALRDPAFQARWGEVVARGESHHEFWIGPGMHLGLFISPNFVAYGLSPRDKFLQPGGIEPIESWDPDVNPQEVLDVLHRIPDWDPAIEGLIRHTPPRATVHWPLLWRNLRREWTSKAGRVVQVGDAAHTTVPASISGGTLAIEDAVTLAACLQLACAGGAPGGAPLGARIYNLLRYQRVSCVQKMSFVNSENLGAADMNEVLKKDPEKVKVRFPKWLFQHDPEAYVYEKYGQAYAHLVLGTDFQNTNFPPGHDFKMWTIEEIHADILAGKKVADLLDGDWD.

The segment at 1–29 (MVSNEYLTHGDKDEFDPAKWSSTPGELPP) is disordered. Basic and acidic residues predominate over residues 8 to 17 (THGDKDEFDP). FAD contacts are provided by Val79 and Arg146. Arg227 is an active-site residue. Residues Asp358 and Gly371 each contribute to the FAD site.

This sequence belongs to the paxM FAD-dependent monooxygenase family. Requires FAD as cofactor.

It functions in the pathway secondary metabolite biosynthesis. Functionally, FAD-dependent monooxygenase; part of the gene cluster that mediates the biosynthesis of the tetrahydroxanthone dimer secalonic acid D. The pathway begins with the synthesis of atrochrysone thioester by the polyketide synthase AacuL. The atrochrysone carboxyl ACP thioesterase AacuM then breaks the thioester bond and releases the atrochrysone carboxylic acid from AacuL. Atrochrysone carboxylic acid is decarboxylated by the decarboxylase AacuI, and oxidized by the anthrone oxygenase AacuG to yield emodin. Emodin is then reduced to emodin hydroquinone by a yet unidentified oxidoreductase. A-ring reduction by the short chain dehydrogenase AacuN, dehydration by the scytalone dehydratase-like protein AacuK and probable spontaneous re-oxidation, results in overall deoxygenation to chrysophanol. Baeyer-Villiger oxidation by the Baeyer-Villiger monooxygenase (BVMO) AacuH then yields monodictyphenone. Monodictyphenone is transformed into compounds with the tetrahydroxanthone skeleton via methylesterification by the methyltransferase AacuQ, followed by the action of the flavin-dependent monooxygenase AacuC, the isomerase AacuP, and the short chain dehydrogenase/reductase AacuF or AacuD. AacuF and AacuD should accept the same compound as a substrate but perform the ketoreduction with a different stereoselectivity, thus yielding blennolides B and A, respectively. In the final step of the biosynthesis, the cytochrome P450 monooxygenase AacuE accepts blennolide B and/or blennolide A to conduct the dimerization reaction to furnish the tetrahydroxanthone dimers, secalonic acids D, B, and F. This Aspergillus aculeatus (strain ATCC 16872 / CBS 172.66 / WB 5094) protein is FAD-dependent monooxygenase AacuC.